Consider the following 332-residue polypeptide: Fructose-1,6-bisphosphatase class 1 (332 aa).

Positions 89, 110, 112, and 113 each coordinate Mg(2+). Substrate is bound by residues 113 to 116, Asn206, Tyr239, 257 to 259, and Lys269; these read DGSS and YLY. Mg(2+) is bound at residue Glu275.

The protein belongs to the FBPase class 1 family. As to quaternary structure, homotetramer. Mg(2+) is required as a cofactor.

Its subcellular location is the cytoplasm. The catalysed reaction is beta-D-fructose 1,6-bisphosphate + H2O = beta-D-fructose 6-phosphate + phosphate. It functions in the pathway carbohydrate biosynthesis; gluconeogenesis. The protein is Fructose-1,6-bisphosphatase class 1 of Klebsiella pneumoniae subsp. pneumoniae (strain ATCC 700721 / MGH 78578).